We begin with the raw amino-acid sequence, 231 residues long: tRNA (guanine-N(1)-)-methyltransferase (231 aa).

G112 is a binding site for S-adenosyl-L-methionine.

This sequence belongs to the RNA methyltransferase TrmD family. Homodimer.

Its subcellular location is the cytoplasm. It carries out the reaction guanosine(37) in tRNA + S-adenosyl-L-methionine = N(1)-methylguanosine(37) in tRNA + S-adenosyl-L-homocysteine + H(+). Its function is as follows. Specifically methylates guanosine-37 in various tRNAs. The polypeptide is tRNA (guanine-N(1)-)-methyltransferase (Chlorobium chlorochromatii (strain CaD3)).